The chain runs to 123 residues: MSTIQQLIRNTRQPIEDRTKSPALRGCPQRRGVCTRVYTTTPKKPNSALRKVARVRLTSGFEITAYIPGIGHNLQEHSVVLVRGGRVKDLPGVRYHIVRGTLDAVGVKDRKQGRSQYGVKKPK.

This sequence belongs to the universal ribosomal protein uS12 family. In terms of assembly, part of the 30S ribosomal subunit.

The protein localises to the plastid. The protein resides in the chloroplast. Functionally, with S4 and S5 plays an important role in translational accuracy. Located at the interface of the 30S and 50S subunits. The protein is Small ribosomal subunit protein uS12cz/uS12cy (rps12-A) of Angiopteris evecta (Mule's foot fern).